Consider the following 470-residue polypeptide: ATP synthase subunit beta (470 aa).

158–165 serves as a coordination point for ATP; it reads GGAGVGKT.

This sequence belongs to the ATPase alpha/beta chains family. F-type ATPases have 2 components, CF(1) - the catalytic core - and CF(0) - the membrane proton channel. CF(1) has five subunits: alpha(3), beta(3), gamma(1), delta(1), epsilon(1). CF(0) has three main subunits: a(1), b(2) and c(9-12). The alpha and beta chains form an alternating ring which encloses part of the gamma chain. CF(1) is attached to CF(0) by a central stalk formed by the gamma and epsilon chains, while a peripheral stalk is formed by the delta and b chains.

It is found in the cell membrane. It catalyses the reaction ATP + H2O + 4 H(+)(in) = ADP + phosphate + 5 H(+)(out). Produces ATP from ADP in the presence of a proton gradient across the membrane. The catalytic sites are hosted primarily by the beta subunits. The chain is ATP synthase subunit beta from Halalkalibacterium halodurans (strain ATCC BAA-125 / DSM 18197 / FERM 7344 / JCM 9153 / C-125) (Bacillus halodurans).